The chain runs to 387 residues: Cysteine desulfurase IscS (387 aa).

Residues 73 to 74 (AT), N155, Q183, and 203 to 205 (SAH) each bind pyridoxal 5'-phosphate. K206 bears the N6-(pyridoxal phosphate)lysine mark. T241 is a binding site for pyridoxal 5'-phosphate. The Cysteine persulfide intermediate role is filled by C328. C328 provides a ligand contact to [2Fe-2S] cluster.

The protein belongs to the class-V pyridoxal-phosphate-dependent aminotransferase family. NifS/IscS subfamily. Homodimer. Forms a heterotetramer with IscU, interacts with other sulfur acceptors. The cofactor is pyridoxal 5'-phosphate.

The protein resides in the cytoplasm. It catalyses the reaction (sulfur carrier)-H + L-cysteine = (sulfur carrier)-SH + L-alanine. It functions in the pathway cofactor biosynthesis; iron-sulfur cluster biosynthesis. Functionally, master enzyme that delivers sulfur to a number of partners involved in Fe-S cluster assembly, tRNA modification or cofactor biosynthesis. Catalyzes the removal of elemental sulfur atoms from cysteine to produce alanine. Functions as a sulfur delivery protein for Fe-S cluster synthesis onto IscU, an Fe-S scaffold assembly protein, as well as other S acceptor proteins. The chain is Cysteine desulfurase IscS from Helicobacter pylori (strain ATCC 700392 / 26695) (Campylobacter pylori).